The sequence spans 290 residues: 4-diphosphocytidyl-2-C-methyl-D-erythritol kinase (290 aa).

Residue lysine 10 is part of the active site. 96 to 106 (PIAAGLGGGSS) contributes to the ATP binding site. The active site involves aspartate 138.

Belongs to the GHMP kinase family. IspE subfamily.

The enzyme catalyses 4-CDP-2-C-methyl-D-erythritol + ATP = 4-CDP-2-C-methyl-D-erythritol 2-phosphate + ADP + H(+). It functions in the pathway isoprenoid biosynthesis; isopentenyl diphosphate biosynthesis via DXP pathway; isopentenyl diphosphate from 1-deoxy-D-xylulose 5-phosphate: step 3/6. In terms of biological role, catalyzes the phosphorylation of the position 2 hydroxy group of 4-diphosphocytidyl-2C-methyl-D-erythritol. This chain is 4-diphosphocytidyl-2-C-methyl-D-erythritol kinase, found in Caulobacter vibrioides (strain NA1000 / CB15N) (Caulobacter crescentus).